A 577-amino-acid chain; its full sequence is Phosphoethanolamine transferase CptA (577 aa).

The next 5 helical transmembrane spans lie at 17 to 37 (LGWALLYFWFFSTLLQAIIYL), 45 to 65 (GLRDSLLYSSLWLIPVFLFPG), 69 to 89 (VIAAVIGVVLWAASLAALSYY), 119 to 139 (YFSLKIVLVALAYTVAAILLW), and 154 to 174 (LVSFALLYGLILHPIAMNTFI).

This sequence belongs to the phosphoethanolamine transferase family. EptC/CptA subfamily.

It is found in the cell inner membrane. Its pathway is bacterial outer membrane biogenesis; LPS core biosynthesis. Catalyzes the addition of a phosphoethanolamine moiety to the outer membrane lipopolysaccharide core. This Salmonella typhimurium (strain LT2 / SGSC1412 / ATCC 700720) protein is Phosphoethanolamine transferase CptA (cptA).